A 442-amino-acid polypeptide reads, in one-letter code: Protein PRRC1-A (442 aa).

The disordered stretch occupies residues 1-27 (MMEESGIETTPPSTPPPSTIGTSVPAA).

It belongs to the PRRC1 family.

Its subcellular location is the golgi apparatus. The polypeptide is Protein PRRC1-A (prrc1-a) (Xenopus laevis (African clawed frog)).